Here is a 361-residue protein sequence, read N- to C-terminus: Chorismate synthase (361 aa).

Arginine 48 provides a ligand contact to NADP(+). Residues 125 to 127 (RSS), 238 to 239 (NA), glycine 278, 293 to 297 (KPTSS), and arginine 319 each bind FMN.

Belongs to the chorismate synthase family. Homotetramer. It depends on FMNH2 as a cofactor.

It carries out the reaction 5-O-(1-carboxyvinyl)-3-phosphoshikimate = chorismate + phosphate. The protein operates within metabolic intermediate biosynthesis; chorismate biosynthesis; chorismate from D-erythrose 4-phosphate and phosphoenolpyruvate: step 7/7. In terms of biological role, catalyzes the anti-1,4-elimination of the C-3 phosphate and the C-6 proR hydrogen from 5-enolpyruvylshikimate-3-phosphate (EPSP) to yield chorismate, which is the branch point compound that serves as the starting substrate for the three terminal pathways of aromatic amino acid biosynthesis. This reaction introduces a second double bond into the aromatic ring system. The chain is Chorismate synthase from Aliivibrio fischeri (strain ATCC 700601 / ES114) (Vibrio fischeri).